We begin with the raw amino-acid sequence, 476 residues long: TOM1-like protein 1 (476 aa).

The VHS domain maps to 22-154; it reads ATFAGVQTED…DLVKKGVQFP (133 aa). The disordered stretch occupies residues 155-179; sequence PSEAEAETARQETAQISSNPPTSVP. The segment covering 170 to 179 has biased composition (polar residues); the sequence is ISSNPPTSVP. Ser171 is subject to Phosphoserine. Residues 200–288 form the GAT domain; the sequence is EQIGKLHSEL…AILGYERFTR (89 aa). The segment covering 298–314 has biased composition (polar residues); sequence KNQKEATNTTSEPSAPS. Positions 298-327 are disordered; that stretch reads KNQKEATNTTSEPSAPSQDLLDLSPSPRMP. 3 positions are modified to phosphoserine: Ser314, Ser321, and Ser323. The interaction with GRB2 stretch occupies residues 392 to 395; sequence YDNF. Residues 421–425 carry the SH3-binding motif; that stretch reads LPPLP. The segment at 442–445 is interaction with PIK3R1; the sequence is YEVM. Tyr460 carries the post-translational modification Phosphotyrosine. Residues 460–463 carry the SH2-binding motif; sequence YEEI.

Belongs to the TOM1 family. Interacts with FYN, GRB2 and PIK3R1 when phosphorylated. Interacts with LYN. Phosphorylated on tyrosines by FYN and LYN.

Its subcellular location is the golgi apparatus. It localises to the golgi stack. The protein resides in the endosome membrane. The protein localises to the cytoplasm. It is found in the membrane. Its function is as follows. Probable adapter protein involved in signaling pathways. Interacts with the SH2 and SH3 domains of various signaling proteins when it is phosphorylated. May promote FYN activation, possibly by disrupting intramolecular SH3-dependent interactions. The protein is TOM1-like protein 1 (TOM1L1) of Homo sapiens (Human).